The primary structure comprises 161 residues: 3-hydroxyacyl-[acyl-carrier-protein] dehydratase FabZ (161 aa).

The active site involves His66.

Belongs to the thioester dehydratase family. FabZ subfamily.

Its subcellular location is the cytoplasm. The enzyme catalyses a (3R)-hydroxyacyl-[ACP] = a (2E)-enoyl-[ACP] + H2O. Functionally, involved in unsaturated fatty acids biosynthesis. Catalyzes the dehydration of short chain beta-hydroxyacyl-ACPs and long chain saturated and unsaturated beta-hydroxyacyl-ACPs. In Gluconacetobacter diazotrophicus (strain ATCC 49037 / DSM 5601 / CCUG 37298 / CIP 103539 / LMG 7603 / PAl5), this protein is 3-hydroxyacyl-[acyl-carrier-protein] dehydratase FabZ.